Reading from the N-terminus, the 43-residue chain is Protein PsbN (43 aa).

The helical transmembrane segment at 5-27 (TVLSIFISSLLLGITGYSIYTAF) threads the bilayer.

It belongs to the PsbN family.

The protein localises to the plastid. The protein resides in the chloroplast thylakoid membrane. Its function is as follows. May play a role in photosystem I and II biogenesis. The polypeptide is Protein PsbN (Porphyra purpurea (Red seaweed)).